The sequence spans 227 residues: YEATS domain-containing protein 4 (227 aa).

The 144-residue stretch at Arg15 to Ser158 folds into the YEATS domain. Lys37 participates in a covalent cross-link: Glycyl lysine isopeptide (Lys-Gly) (interchain with G-Cter in SUMO2). The tract at residues Trp93–Glu97 is diacetylated histone H3 binding. The segment at Leu163 to Ile227 is interaction with MLLT10. The interaction with TACC1 stretch occupies residues His168 to Ile227. The stretch at Lys178–Asp226 forms a coiled coil.

As to quaternary structure, component of numerous complexes with chromatin remodeling and histone acetyltransferase activity. Component of the NuA4 histone acetyltransferase complex which contains the catalytic subunit KAT5/TIP60 and the subunits EP400, TRRAP/PAF400, BRD8/SMAP, EPC1, DMAP1/DNMAP1, RUVBL1/TIP49, RUVBL2, ING3, actin, ACTL6A/BAF53A, MORF4L1/MRG15, MORF4L2/MRGX, MRGBP, YEATS4/GAS41, VPS72/YL1 and MEAF6. The NuA4 complex interacts with MYC and the adenovirus E1A protein. Component of a NuA4-related complex which contains EP400, TRRAP/PAF400, SRCAP, BRD8/SMAP, EPC1, DMAP1/DNMAP1, RUVBL1/TIP49, RUVBL2, actin, ACTL6A/BAF53A, VPS72 and YEATS4/GAS41. Interacts with MLLT10/AF10. Also interacts with the SWI/SNF component SMARCB1/BAF47, TACC1 and TACC2, and the nuclear matrix protein NUMA1.

The protein localises to the nucleus. Chromatin reader component of the NuA4 histone acetyltransferase (HAT) complex, a complex involved in transcriptional activation of select genes principally by acetylation of nucleosomal histones H4 and H2A. Specifically recognizes and binds acylated histone H3, with a preference for histone H3 diacetylated at 'Lys-18' and 'Lys-27' (H3K18ac and H3K27ac) or histone H3 diacetylated at 'Lys-14' and 'Lys-27' (H3K14ac and H3K27ac). Also able to recognize and bind crotonylated histone H3. May also recognize and bind histone H3 succinylated at 'Lys-122' (H3K122succ); additional evidences are however required to confirm this result in vivo. Plays a key role in histone variant H2AZ1/H2A.Z deposition into specific chromatin regions: recognizes and binds H3K14ac and H3K27ac on the promoters of actively transcribed genes and recruits NuA4-related complex to deposit H2AZ1/H2A.Z. H2AZ1/H2A.Z deposition is required for maintenance of embryonic stem cell. This is YEATS domain-containing protein 4 from Mus musculus (Mouse).